Here is a 1533-residue protein sequence, read N- to C-terminus: Maternal protein pumilio (1533 aa).

4 disordered regions span residues 102–149 (ACGD…TIGM), 207–276 (AAAV…QQHP), 304–331 (YDHHGGAMHPGMNGGMPKQQPLGPPGAG), and 382–452 (WEKS…AGIL). A compositionally biased stretch (basic and acidic residues) spans 103 to 117 (CGDDGHGIDNPDKWK). Residues 133-149 (PGNGSNGGPGAIGTIGM) show a composition bias toward gly residues. The segment covering 207–237 (AAAVAAQQQHQHPHQQHPQQQQQQQQAQNQG) has biased composition (low complexity). Over residues 243-255 (MGGGNGLGNGNGL) the composition is skewed to gly residues. Positions 256 to 276 (GIQHPGQQQQQQQQQQQQQHP) are enriched in low complexity. Phosphoserine is present on residues S453, S468, S470, and S477. Positions 470–479 (SPTNKDSSLS) are enriched in polar residues. Disordered regions lie at residues 470 to 558 (SPTN…NLLF), 697 to 725 (VGAPPVPNGSLQQSQQQQQQQQQQQQQQQ), 846 to 912 (VLVP…AFSP), and 975 to 1008 (LGAPITPPPSAQSCLLGSRAPGAESRQRQQQQQQ). Residues 483 to 503 (PHLRNLKFDDNDKSRDDKEKA) show a composition bias toward basic and acidic residues. S505 is subject to Phosphoserine. Residues 863 to 875 (PQLYQPQPQTAQQ) show a composition bias toward low complexity. In terms of domain architecture, PUM-HD spans 1091 to 1428 (GRSRLLEDFR…HINAKLEKYY (338 aa)). Pumilio repeat units lie at residues 1111-1146 (DLANHIVEFSQDQHGSRFIQQKLERATAAEKQMVFS), 1147-1182 (EILAAAYSLMTDVFGNYVIQKFFEFGTPEQKNTLGM), 1183-1218 (QVKGHVLQLALQMYGCRVIQKALESISPEQQQEIVH), 1219-1254 (ELDGHVLKCVKDQNGNHVVQKCIECVDPVALQFIIN), 1255-1290 (AFKGQVYSLSTHPYGCRVIQRILEHCTAEQTTPILD), 1291-1326 (ELHEHTEQLIQDQYGNYVIQHVLEHGKQEDKSILIN), 1327-1362 (SVRGKVLVLSQHKFASNVVEKCVTHATRGERTGLID), and 1366-1402 (TFNDNALHVMMKDQYANYVVQKMIDVSEPTQLKKLMT). Residues 1126–1130 (SRFIQ) are adenine-nucleotide binding in RNA target. The tract at residues 1162-1166 (NYVIQ) is uracil-nucleotide binding in RNA target. The adenine-nucleotide binding in RNA target stretch occupies residues 1198–1202 (CRVIQ). Residues 1234-1238 (NHVVQ) form a non-specific-nucleotide binding in RNA target region. An adenine-nucleotide binding in RNA target region spans residues 1270-1274 (CRVIQ). Residues 1306–1310 (NYVIQ) are uracil-nucleotide binding in RNA target. A guanine-nucleotide binding in RNA target region spans residues 1342–1346 (SNVVE). The uracil-nucleotide binding in RNA target stretch occupies residues 1382–1386 (NYVVQ). The segment at 1494-1533 (AMVVEPSSPDASESSSSVVSGAVNSSLGPIGPPTNGNVVL) is disordered. Residues 1496 to 1519 (VVEPSSPDASESSSSVVSGAVNSS) are compositionally biased toward low complexity.

In terms of assembly, interacts with nanos (nos) and brat. Acts via the formation of a quaternary complex composed of pum, nanos, brat and the 3'-UTR mRNA of hb.

It localises to the cytoplasm. Its subcellular location is the cytoplasmic ribonucleoprotein granule. Functionally, sequence-specific RNA-binding protein that acts as a post-transcriptional repressor by binding the 3'-UTR of mRNA targets. Binds to an RNA consensus sequence, the Pumilio Response Element (PRE), 5'-UGUANAUA-3', that is related to the Nanos Response Element (NRE). Mediates post-transcriptional repression of transcripts via different mechanisms: acts via direct recruitment of deadenylase complexes leading to translational inhibition and mRNA degradation. Also mediates deadenylation-independent repression by promoting accessibility of miRNAs. Mediates post-transcriptional silencing of E2f mRNA by binding to its 3'-UTR and promoting miRNA regulation. Required for abdominal development and to support proliferation and self-renewal of germ cells. Pum is the only gene required for nanos (nos) activity that is not also required for posterior localization of germline determinants. Pum is required during embryogenesis when nanos activity apparently moves anteriorly from the posterior pole. The chain is Maternal protein pumilio (pum) from Drosophila melanogaster (Fruit fly).